A 47-amino-acid polypeptide reads, in one-letter code: GVPCLCDSDGPSVHGNTLSGTIWLAGCPSGWHNCKAHGPTIGWCCKK.

Intrachain disulfides connect Cys-4-Cys-44, Cys-6-Cys-34, and Cys-27-Cys-45.

This sequence belongs to the sea anemone sodium channel inhibitory toxin family. Type I subfamily.

The protein localises to the secreted. It is found in the nematocyst. Binds specifically to voltage-gated sodium channels (Nav), thereby delaying their inactivation during signal transduction. Has a longer mammalian heart stimulation effect than Hk2a, Hk8a and Hk16a. This is Delta-actitoxin-Aspp1b from Anthopleura sp. (strain 'Zhanjiang') (Sea anemone).